The chain runs to 91 residues: Early E3B 10.4 kDa protein (91 aa).

Positions 1-21 (MVTVLLIFLCLPVIFSSSTFA) are cleaved as a signal peptide. The Lumenal portion of the chain corresponds to 22–33 (AVSDLDPECLAP). The helical transmembrane segment at 34–56 (FAVYLIFTFVTATCVCSIITLLI) threads the bilayer. Residues 57–91 (TSLQFFDYYYVRIVYRRHHPRYQNPQIAALLQLQP) lie on the Cytoplasmic side of the membrane.

This sequence belongs to the adenoviridae E3B family.

Its subcellular location is the host endoplasmic reticulum membrane. Down-regulates the EGF receptor. The sequence is that of Early E3B 10.4 kDa protein from Homo sapiens (Human).